The chain runs to 274 residues: 23S rRNA (adenosine(1067)-2'-O)-methyltransferase (274 aa).

S-adenosyl-L-methionine contacts are provided by residues Arg-165, Leu-195, Gly-218–Glu-220, Ile-238–Met-240, and Leu-247–Ser-252.

The protein belongs to the class IV-like SAM-binding methyltransferase superfamily. RNA methyltransferase TsnR/AvirB family. As to quaternary structure, homodimer.

It catalyses the reaction adenosine(1067) in 23S rRNA + S-adenosyl-L-methionine = 2'-O-methyladenosine(1067) in 23S rRNA + S-adenosyl-L-homocysteine + H(+). Functionally, specifically methylates the adenosine-1067 in 23S ribosomal RNA. Confers resistance to antibiotic nosiheptide. This chain is 23S rRNA (adenosine(1067)-2'-O)-methyltransferase, found in Streptomyces actuosus.